Here is a 148-residue protein sequence, read N- to C-terminus: Ribonuclease H (148 aa).

One can recognise an RNase H type-1 domain in the interval 1-142; the sequence is MSDSVEMFTD…ADQLANRGVD (142 aa). Mg(2+)-binding residues include aspartate 10, glutamate 48, aspartate 70, and aspartate 134.

This sequence belongs to the RNase H family. In terms of assembly, monomer. Requires Mg(2+) as cofactor.

It is found in the cytoplasm. The catalysed reaction is Endonucleolytic cleavage to 5'-phosphomonoester.. Endonuclease that specifically degrades the RNA of RNA-DNA hybrids. This Pseudomonas putida (strain ATCC 700007 / DSM 6899 / JCM 31910 / BCRC 17059 / LMG 24140 / F1) protein is Ribonuclease H.